We begin with the raw amino-acid sequence, 245 residues long: Membrane-spanning 4-domains subfamily A member 15 (245 aa).

The segment at 1–30 (MWERRGRGESAAGTAAVASRNASGLRPPPA) is disordered. 4 helical membrane passes run 78–98 (GTVQ…LLMV), 103–123 (LGML…FIIS), 147–167 (ILSA…FGVT), and 176–196 (LAVL…ATHF).

It belongs to the MS4A family.

The protein resides in the membrane. Its function is as follows. May be involved in signal transduction as a component of a multimeric receptor complex. The protein is Membrane-spanning 4-domains subfamily A member 15 (Ms4a15) of Mus musculus (Mouse).